The following is a 272-amino-acid chain: Glucosyl-3-phosphoglycerate/mannosyl-3-phosphoglycerate phosphatase (272 aa).

Residue aspartate 8 is the Nucleophile of the active site. 3 residues coordinate Mg(2+): aspartate 8, aspartate 10, and aspartate 214.

It belongs to the HAD-like hydrolase superfamily. MPGP family. Monomer. It depends on Co(2+) as a cofactor. Mg(2+) is required as a cofactor. Requires Ni(2+) as cofactor.

The catalysed reaction is (2R)-2-O-(alpha-D-glucopyranosyl)-3-phospho-glycerate + H2O = (2R)-2-O-(alpha-D-glucopyranosyl)-glycerate + phosphate. The enzyme catalyses 2-O-(alpha-D-mannosyl)-3-phosphoglycerate + H2O = (2R)-2-O-(alpha-D-mannosyl)-glycerate + phosphate. Functionally, involved in the biosynthesis of glucosylglycerate. Catalyzes the dephosphorylation of glucosyl-3-phosphoglycerate (GPG) and mannosyl-3-phosphoglycerate (MPG) to glucosylglycerate (GG) and mannosylglycerate (MG), respectively. This Methanococcoides burtonii (strain DSM 6242 / NBRC 107633 / OCM 468 / ACE-M) protein is Glucosyl-3-phosphoglycerate/mannosyl-3-phosphoglycerate phosphatase.